A 63-amino-acid polypeptide reads, in one-letter code: Beta-defensin 4 (63 aa).

The N-terminal stretch at 1–22 (MRIHYLLFSFLLVLLSPLSAFT) is a signal peptide. Gln23 carries the post-translational modification Pyrrolidone carboxylic acid. 3 cysteine pairs are disulfide-bonded: Cys31/Cys59, Cys38/Cys52, and Cys42/Cys60.

The protein belongs to the beta-defensin family. Highly expressed in lung.

It is found in the secreted. Exhibits antimicrobial activity against Gram-negative bacteria and Gram-positive bacteria. May act as a ligand for C-C chemokine receptor CCR6. Binds to CCR6 and induces chemotactic activity of CCR6-expressing cells. The polypeptide is Beta-defensin 4 (Defb4) (Rattus norvegicus (Rat)).